Consider the following 508-residue polypeptide: MGLPWYRVHTVVLNDPGRLLSVHIMHTALVAGWAGSMALYELAVFDPSDPVLDPMWRQGMFVIPFMTRLGITNSWGGWNITGGTITNPGLWSYEGVAGAHIVFSGLCFLAAIWHWVYWDLEIFCDERTGKPSLDLPKIFGIHLFLSGVACFGFGAFHVTGLYGPGIWVSDPYGLTGKVQPVNPAWGVEGFDPFVPGGIASHHIAAGTLGILAGLFHLSVRPPQRLYKGLRMGNIETVLSSSIAAVFFAAFVVAGTMWYGSATTPIELFGPTRYQWDQGYFQQEIYRRVSAGLAENPSLSEVWSKIPEKLAFYDYIGNNPAKGGLFRAGSMDNGDGIAVGWLGHPVFRNKEGRELFVRRMPTFFETFPVVLVDGDGIVRADVPFRRAESKYSVEQVGVTVEFYGGELNGVSYSDPATVKKYARRAQLGEIFELDRATLKSDGVFRSSPRGWFTFGHASFALLFFFGHIWHGARTLFRDVFAGIDPDLDAQVEFGAFQKLGDPTTKRQAV.

Transmembrane regions (helical) follow at residues 21–36 (SVHI…WAGS), 101–115 (IVFS…IWHW), 140–156 (GIHL…FGAF), 203–218 (IAAG…FHLS), 237–252 (VLSS…AFVV), and 457–472 (SFAL…HGAR).

Belongs to the PsbB/PsbC family. PsbB subfamily. PSII is composed of 1 copy each of membrane proteins PsbA, PsbB, PsbC, PsbD, PsbE, PsbF, PsbH, PsbI, PsbJ, PsbK, PsbL, PsbM, PsbT, PsbX, PsbY, PsbZ, Psb30/Ycf12, at least 3 peripheral proteins of the oxygen-evolving complex and a large number of cofactors. It forms dimeric complexes. It depends on Binds multiple chlorophylls. PSII binds additional chlorophylls, carotenoids and specific lipids. as a cofactor.

Its subcellular location is the plastid. It is found in the chloroplast thylakoid membrane. One of the components of the core complex of photosystem II (PSII). It binds chlorophyll and helps catalyze the primary light-induced photochemical processes of PSII. PSII is a light-driven water:plastoquinone oxidoreductase, using light energy to abstract electrons from H(2)O, generating O(2) and a proton gradient subsequently used for ATP formation. The chain is Photosystem II CP47 reaction center protein from Aethionema cordifolium (Lebanon stonecress).